Consider the following 712-residue polypeptide: Autophagy-related protein 13 (712 aa).

Disordered stretches follow at residues 388-443 (AGST…ETPP) and 568-611 (GSVG…DDDE). Positions 402 to 415 (SSVGSGSKYSSSFG) are enriched in low complexity. Positions 412 to 420 (SSFGRIRRH) are ATG17-binding. Over residues 424–439 (RRSESIDRTAKPRKSN) the composition is skewed to basic and acidic residues. Residues 441–500 (TPPEDLLEFVKLLEDKKELNMKPSTILPQQDISSSLIKFQSMKPNNDTLSDNLSMSMSID) form an ATG1-binding region. Acidic residues predominate over residues 576-585 (TNEDSKEDED).

The protein belongs to the ATG13 family. Fungi subfamily. In terms of assembly, hypophosphorylated form interacts with ATG1 to form the ATG1-ATG13 kinase complex. The ATG1-ATG13 complex interacts with the ATG17-ATG29-ATG31 complex through direct interaction with ATG17. Interacts with VAC8. Hyperphosphorylated under nutrient-rich conditions. Starvation and TOR inactivation results in ATG13 partial dephosphorylation leading to ATG1-binding. Dephosphorylation induces ATG17-binding.

It localises to the cytoplasm. Its subcellular location is the preautophagosomal structure. Its function is as follows. Activates the ATG1 kinase in a nutritional condition dependent manner through the TOR pathway, leading to autophagy. Involved in ATG9 and ATG23 cycling through the pre-autophagosomal structure. Also involved in cytoplasm to vacuole transport (Cvt) and more specifically in Cvt vesicle formation. Seems to play a role in the switching machinery regulating the conversion between the Cvt pathway and autophagy. Finally, ATG13 is also required for glycogen storage during stationary phase. In Kluyveromyces marxianus (strain DMKU3-1042 / BCC 29191 / NBRC 104275) (Yeast), this protein is Autophagy-related protein 13.